The primary structure comprises 379 residues: Queuine tRNA-ribosyltransferase (379 aa).

Catalysis depends on D94, which acts as the Proton acceptor. Substrate-binding positions include 94–98, D148, Q191, and G218; that span reads DSGGF. The segment at 249-255 is RNA binding; sequence GVGSPDA. The Nucleophile role is filled by D268. Residues 273-277 are RNA binding; important for wobble base 34 recognition; it reads TRIAR. Residues C306, C308, C311, and H337 each contribute to the Zn(2+) site.

It belongs to the queuine tRNA-ribosyltransferase family. As to quaternary structure, homodimer. Within each dimer, one monomer is responsible for RNA recognition and catalysis, while the other monomer binds to the replacement base PreQ1. Requires Zn(2+) as cofactor.

It catalyses the reaction 7-aminomethyl-7-carbaguanine + guanosine(34) in tRNA = 7-aminomethyl-7-carbaguanosine(34) in tRNA + guanine. Its pathway is tRNA modification; tRNA-queuosine biosynthesis. Functionally, catalyzes the base-exchange of a guanine (G) residue with the queuine precursor 7-aminomethyl-7-deazaguanine (PreQ1) at position 34 (anticodon wobble position) in tRNAs with GU(N) anticodons (tRNA-Asp, -Asn, -His and -Tyr). Catalysis occurs through a double-displacement mechanism. The nucleophile active site attacks the C1' of nucleotide 34 to detach the guanine base from the RNA, forming a covalent enzyme-RNA intermediate. The proton acceptor active site deprotonates the incoming PreQ1, allowing a nucleophilic attack on the C1' of the ribose to form the product. After dissociation, two additional enzymatic reactions on the tRNA convert PreQ1 to queuine (Q), resulting in the hypermodified nucleoside queuosine (7-(((4,5-cis-dihydroxy-2-cyclopenten-1-yl)amino)methyl)-7-deazaguanosine). This is Queuine tRNA-ribosyltransferase from Staphylococcus epidermidis (strain ATCC 35984 / DSM 28319 / BCRC 17069 / CCUG 31568 / BM 3577 / RP62A).